The primary structure comprises 622 residues: Low affinity potassium transport system protein Kup (622 aa).

12 helical membrane passes run 9–29 (LPAI…TSPL), 49–69 (VFGF…IKYL), 103–123 (VIMG…TPAI), 137–157 (PQLD…LFMI), 165–185 (VGKL…GLGL), 213–233 (VSFI…ALYA), 247–267 (WFTV…ALLL), 276–296 (PFFL…AALA), 337–357 (IYIP…IVSF), 363–383 (LAAA…ILST), 396–416 (FVAL…TANL), and 419–439 (LLSG…VMTT).

The protein belongs to the HAK/KUP transporter (TC 2.A.72) family.

It is found in the cell inner membrane. The enzyme catalyses K(+)(in) + H(+)(in) = K(+)(out) + H(+)(out). In terms of biological role, responsible for the low-affinity transport of potassium into the cell. Likely operates as a K(+):H(+) symporter. In Shigella flexneri serotype 5b (strain 8401), this protein is Low affinity potassium transport system protein Kup.